The following is a 461-amino-acid chain: Fumarate hydratase class II (461 aa).

Substrate is bound by residues 99 to 101 (SGT), 130 to 133 (HPND), 140 to 142 (STN), and Thr-188. The active-site Proton donor/acceptor is His-189. Ser-319 is an active-site residue. Substrate is bound by residues Ser-320 and 325-327 (KVN).

It belongs to the class-II fumarase/aspartase family. Fumarase subfamily. As to quaternary structure, homotetramer.

Its subcellular location is the cytoplasm. It catalyses the reaction (S)-malate = fumarate + H2O. Its pathway is carbohydrate metabolism; tricarboxylic acid cycle; (S)-malate from fumarate: step 1/1. Functionally, involved in the TCA cycle. Catalyzes the stereospecific interconversion of fumarate to L-malate. The sequence is that of Fumarate hydratase class II from Prochlorococcus marinus subsp. pastoris (strain CCMP1986 / NIES-2087 / MED4).